The chain runs to 278 residues: Aquaporin NIP3-3 (278 aa).

The next 2 membrane-spanning stretches (helical) occupy residues V70 to M90 and T99 to I119. The short motif at N127–A129 is the NPA 1 element. 3 helical membrane-spanning segments follow: residues P141–V163, A185–T205, and L213–T233. Positions N238–A240 match the NPA 2 motif. The chain crosses the membrane as a helical span at residues I255–A275.

Belongs to the MIP/aquaporin (TC 1.A.8) family. NIP (TC 1.A.8.12) subfamily. Expressed in leaves and at lower levels in roots and anthers.

It is found in the membrane. In terms of biological role, aquaporins facilitate the transport of water and small neutral solutes across cell membranes. In Oryza sativa subsp. japonica (Rice), this protein is Aquaporin NIP3-3 (NIP3-3).